We begin with the raw amino-acid sequence, 440 residues long: Protein OSB3, chloroplastic/mitochondrial (440 aa).

A chloroplast and mitochondrion-targeting transit peptide spans 1–61; sequence MNLISRTLTR…AKVSVKPPLN (61 aa). Positions 80–178 constitute an SSB domain; that stretch reads ISNWINLIGF…VMVQNLNFVQ (99 aa). PDF region regions lie at residues 218–270, 294–342, and 380–428; these read WKHL…LKLE, WKDL…SKLP, and WKNL…SKLP.

Expressed primarily in the female gametophyte and in the floral abscission zone.

Its subcellular location is the mitochondrion. The protein resides in the plastid. It localises to the chloroplast. Its function is as follows. Binds single-stranded DNA. The chain is Protein OSB3, chloroplastic/mitochondrial (OSB3) from Arabidopsis thaliana (Mouse-ear cress).